The sequence spans 530 residues: 4-alpha-glucanotransferase (530 aa).

The protein belongs to the disproportionating enzyme family.

Its subcellular location is the cytoplasm. The enzyme catalyses Transfers a segment of a (1-&gt;4)-alpha-D-glucan to a new position in an acceptor, which may be glucose or a (1-&gt;4)-alpha-D-glucan.. In Chlamydia caviae (strain ATCC VR-813 / DSM 19441 / 03DC25 / GPIC) (Chlamydophila caviae), this protein is 4-alpha-glucanotransferase (malQ).